We begin with the raw amino-acid sequence, 748 residues long: Subtilisin-like protease (748 aa).

The first 24 residues, 1–24 (MMKMELRLLVSLIFILCSISMLAA), serve as a signal peptide directing secretion. Positions 37-115 (TYIVHVKKSE…ARPERTLELH (79 aa)) constitute an Inhibitor I9 domain. The region spanning 122–600 (FLGLKQGQGL…AGHVNPVKAN (479 aa)) is the Peptidase S8 domain. Active-site charge relay system residues include Asp-147 and His-206. Residues 365–454 (PLVYPGSFGY…VEVSYAAGLT (90 aa)) form the PA domain. Residues Asn-376, Asn-380, and Asn-405 are each glycosylated (N-linked (GlcNAc...) asparagine). Ser-533 (charge relay system) is an active-site residue. 2 N-linked (GlcNAc...) asparagine glycosylation sites follow: Asn-675 and Asn-722.

It belongs to the peptidase S8 family.

It is found in the secreted. The protein resides in the extracellular space. It localises to the apoplast. Functionally, required for arbuscular mycorrhiza (AM) development during AM symbiosis with AM fungi (e.g. Glomeromycota intraradices). The sequence is that of Subtilisin-like protease from Medicago truncatula (Barrel medic).